The chain runs to 195 residues: Putative manganese efflux pump MntP (195 aa).

Helical transmembrane passes span Ile-4–Met-24, Phe-39–Leu-59, Phe-64–Met-84, Ile-120–Thr-140, Ile-145–Ala-165, and Gly-175–Val-195.

The protein belongs to the MntP (TC 9.B.29) family.

It is found in the cell membrane. In terms of biological role, probably functions as a manganese efflux pump. This Syntrophomonas wolfei subsp. wolfei (strain DSM 2245B / Goettingen) protein is Putative manganese efflux pump MntP.